Reading from the N-terminus, the 173-residue chain is C-type lectin mosGCTL-7 (173 aa).

Residues 1 to 24 (MVVGWSLLGWALSWLAVATVVVSA) form the signal peptide. Positions 51 to 167 (NWFKATEYCH…CWDEYYFVCE (117 aa)) constitute a C-type lectin domain. 2 cysteine pairs are disulfide-bonded: Cys59-Cys166 and Cys139-Cys158. 2 N-linked (GlcNAc...) asparagine glycosylation sites follow: Asn119 and Asn144.

Interacts with putative receptor-type tyrosine-protein phosphatase mosPTP-1; the interaction may mediate the recruitment of Japanese encephalitis virus particles in complex with C-type lectin mosGCTL-7 to the cell surface.

Its subcellular location is the secreted. Its function is as follows. Carbohydrate-binding protein. (Microbial infection) Facilitates Japanese encephalitis virus infection in mosquitoes. The protein is C-type lectin mosGCTL-7 of Culex quinquefasciatus (Southern house mosquito).